Reading from the N-terminus, the 1857-residue chain is Phosphatidylinositol 3-kinase 2 (1857 aa).

Composition is skewed to low complexity over residues 1–32 and 42–55; these read MKMSEGIISPLSLSSESSEQQQAAIRKFSNGS and NLSVNSSNSGSNNS. Disordered regions lie at residues 1 to 61, 145 to 313, 348 to 468, 481 to 512, and 530 to 573; these read MKMS…KSST, TPLN…TNRV, SSSK…NSIR, ISSNGIPSSPGQVSNKDYNNIGNLSNSSGERV, and ESDI…GPNV. Positions 145–155 are enriched in polar residues; it reads TPLNRSRSGSI. Positions 162–269 are enriched in low complexity; it reads NNLTSSSSSS…NNNNNNNSNS (108 aa). The segment covering 270–281 has biased composition (polar residues); sequence GGSSRMITSKSQ. Composition is skewed to low complexity over residues 288 to 311 and 352 to 464; these read TSNTAATTTTTTTTNTSAPTTPTN and LLIP…QPSN. A compositionally biased stretch (low complexity) spans 533–560; it reads ISSSPRSIGSPNSIRASISSQLPPSLSS. The segment covering 561-570 has biased composition (gly residues); it reads IGGGGGGGSG. The PI3K-RBD domain maps to 821-934; it reads PNKITIMVLL…NQTVELSLTN (114 aa). Residues 996-1078 are disordered; the sequence is KETNKENKDS…SGSGNGSEQP (83 aa). Residues 997–1011 show a composition bias toward basic and acidic residues; sequence ETNKENKDSNKENKD. Low complexity predominate over residues 1012–1056; the sequence is SSSNNNNNNNNNNNNNNNNNNNNNNNNNNNGNNNGNNSNNNSNSN. Residues 1099-1271 enclose the C2 PI3K-type domain; it reads VKRLFRVNIA…QPIILLVEFE (173 aa). Residues 1326–1503 enclose the PIK helical domain; the sequence is PVGLKKLDLD…GLLLEGYLRS (178 aa). The PI3K/PI4K catalytic domain occupies 1568–1845; sequence IIDKCRYMDS…NISVALNTKT (278 aa). Residues 1574–1580 are G-loop; it reads YMDSKKL. The catalytic loop stretch occupies residues 1711-1719; that stretch reads GIGDRHSDN. The tract at residues 1730-1756 is activation loop; sequence HIDFGHFLGNYKKKYGFKRERAPFIFT.

It belongs to the PI3/PI4-kinase family.

The enzyme catalyses a 1,2-diacyl-sn-glycero-3-phospho-(1D-myo-inositol) + ATP = a 1,2-diacyl-sn-glycero-3-phospho-(1D-myo-inositol-3-phosphate) + ADP + H(+). The chain is Phosphatidylinositol 3-kinase 2 (pikB) from Dictyostelium discoideum (Social amoeba).